The primary structure comprises 407 residues: Shaggy-related protein kinase GSK1 (407 aa).

Over residues 1-19 the composition is skewed to pro residues; that stretch reads MEAPPGPEPMELDAPPPPA. A disordered region spans residues 1–21; it reads MEAPPGPEPMELDAPPPPAAV. The Protein kinase domain occupies 68–352; the sequence is YMAERVVGTG…ALDACAHSFF (285 aa). Residues 74 to 82 and Lys97 each bind ATP; that span reads VGTGSFGIV. Asp193 acts as the Proton acceptor in catalysis.

The protein belongs to the protein kinase superfamily. CMGC Ser/Thr protein kinase family. GSK-3 subfamily. In terms of assembly, interacts with LIC. As to expression, highly expressed in the entire young panicles, spikelets, awns, vascular bundles of palea and lemma, stigma and rachilla. Expressed in root tips, root hairs, lamina joint in the collar region, vascular bundles of coleoptiles.

It catalyses the reaction L-seryl-[protein] + ATP = O-phospho-L-seryl-[protein] + ADP + H(+). The enzyme catalyses L-threonyl-[protein] + ATP = O-phospho-L-threonyl-[protein] + ADP + H(+). Functionally, probable serine-threonine kinase that may act as a negative regulator of brassinosteroid (BR) signaling during flower development. May have physiological roles in stress signal-transduction pathways. Phosphorylates LIC in response to BR perception. This is Shaggy-related protein kinase GSK1 from Oryza sativa subsp. japonica (Rice).